A 362-amino-acid polypeptide reads, in one-letter code: Class I histocompatibility antigen, Gogo-B*0101 alpha chain (362 aa).

Positions Met-1 to Ala-24 are cleaved as a signal peptide. The tract at residues Gly-25–Ala-114 is alpha-1. Topologically, residues Gly-25–Ile-308 are extracellular. The N-linked (GlcNAc...) asparagine glycan is linked to Asn-110. The segment at Gly-115–Ala-206 is alpha-2. Cystine bridges form between Cys-125–Cys-188 and Cys-227–Cys-283. The segment at Asp-207–Trp-298 is alpha-3. The region spanning Pro-209 to Thr-295 is the Ig-like C1-type domain. The connecting peptide stretch occupies residues Glu-299–Ile-308. Residues Val-309–Cys-332 traverse the membrane as a helical segment. Residues Arg-333–Ala-362 are Cytoplasmic-facing. A disordered region spans residues Lys-335–Ala-362. Over residues Ser-343–Ala-362 the composition is skewed to low complexity. Residues Ser-356 and Ser-359 each carry the phosphoserine modification.

The protein belongs to the MHC class I family. Heterodimer of an alpha chain and a beta chain (beta-2-microglobulin).

It localises to the membrane. Its function is as follows. Involved in the presentation of foreign antigens to the immune system. The chain is Class I histocompatibility antigen, Gogo-B*0101 alpha chain from Gorilla gorilla gorilla (Western lowland gorilla).